Consider the following 79-residue polypeptide: D-alanyl carrier protein (79 aa).

One can recognise a Carrier domain in the interval 1–76; sequence MKEQIFDIIE…KIAARVQEKK (76 aa). Ser-34 carries the O-(pantetheine 4'-phosphoryl)serine modification.

Belongs to the DltC family. In terms of processing, 4'-phosphopantetheine is transferred from CoA to a specific serine of apo-DCP.

The protein resides in the cytoplasm. The protein operates within cell wall biogenesis; lipoteichoic acid biosynthesis. Carrier protein involved in the D-alanylation of lipoteichoic acid (LTA). The loading of thioester-linked D-alanine onto DltC is catalyzed by D-alanine--D-alanyl carrier protein ligase DltA. The DltC-carried D-alanyl group is further transferred to cell membrane phosphatidylglycerol (PG) by forming an ester bond, probably catalyzed by DltD. D-alanylation of LTA plays an important role in modulating the properties of the cell wall in Gram-positive bacteria, influencing the net charge of the cell wall. The sequence is that of D-alanyl carrier protein from Lactococcus lactis subsp. lactis (strain IL1403) (Streptococcus lactis).